Consider the following 1243-residue polypeptide: Serine/threonine-protein kinase WNK4 (1243 aa).

Polar residues predominate over residues methionine 1–glutamate 17. Residues methionine 1 to valine 142 are disordered. Low complexity predominate over residues valine 65–alanine 77. The span at serine 78–lysine 103 shows a compositional bias: pro residues. Serine 97 is modified (phosphoserine). Residues alanine 118–leucine 127 show a composition bias toward basic and acidic residues. Residues lysine 157 and lysine 175 each participate in a glycyl lysine isopeptide (Lys-Gly) (interchain with G-Cter in ubiquitin) cross-link. The Protein kinase domain maps to leucine 174–phenylalanine 432. Residue serine 184 participates in ATP binding. Glycyl lysine isopeptide (Lys-Gly) (interchain with G-Cter in ubiquitin) cross-links involve residues lysine 186, lysine 226, and lysine 241. Residues threonine 254–methionine 257 and lysine 304 each bind ATP. Aspartate 321 serves as the catalytic Proton acceptor. Residue lysine 328 forms a Glycyl lysine isopeptide (Lys-Gly) (interchain with G-Cter in ubiquitin) linkage. Phosphoserine; by autocatalysis is present on residues serine 331 and serine 335. Residues lysine 387, lysine 393, lysine 450, and lysine 454 each participate in a glycyl lysine isopeptide (Lys-Gly) (interchain with G-Cter in ubiquitin) cross-link. The tract at residues lysine 526–aspartate 564 is disordered. A compositionally biased stretch (pro residues) spans proline 534 to proline 556. The interaction with KLHL3 stretch occupies residues glutamate 557–glutamine 567. Residue serine 575 is modified to Phosphoserine. Over residues serine 630–serine 641 the composition is skewed to low complexity. Disordered stretches follow at residues serine 630–aspartate 683, aspartate 751–glutamate 871, and serine 943–tryptophan 1110. A compositionally biased stretch (basic residues) spans proline 663 to leucine 676. Residues glutamate 767–aspartate 780 show a composition bias toward pro residues. The segment covering tryptophan 797 to serine 812 has biased composition (low complexity). Residues proline 822–phenylalanine 843 show a composition bias toward pro residues. Composition is skewed to low complexity over residues serine 844 to proline 854, proline 862 to glutamate 871, and serine 943 to serine 952. Residues proline 953–alanine 970 are compositionally biased toward pro residues. A Glycyl lysine isopeptide (Lys-Gly) (interchain with G-Cter in ubiquitin) cross-link involves residue lysine 1010. The short motif at arginine 1016–valine 1019 is the RFXV motif element. Phosphoserine is present on serine 1035. Over residues glutamate 1065–alanine 1077 the composition is skewed to basic and acidic residues. Residues lysine 1144, lysine 1157, and lysine 1158 each participate in a glycyl lysine isopeptide (Lys-Gly) (interchain with G-Cter in ubiquitin) cross-link. The disordered stretch occupies residues arginine 1166–methionine 1243. Polar residues-rich tracts occupy residues serine 1193–arginine 1204 and asparagine 1216–glutamine 1228. Position 1217 is a phosphoserine (serine 1217).

This sequence belongs to the protein kinase superfamily. Ser/Thr protein kinase family. WNK subfamily. In terms of assembly, interacts with the C-terminal region of KCNJ1. The cofactor is Mg(2+). Autophosphorylated at Ser-331 and Ser-335, promoting its activation. Phosphorylated by WNK1 and WNK3. Phosphorylated at Ser-575 in a MAP3K15/ASK3-dependent process in response to osmotic stress or hypotonic low-chloride stimulation. In terms of processing, ubiquitinated by the BCR(KLHL3) complex, leading to its degradation. Also ubiquitinated by the BCR(KLHL2) complex. In terms of tissue distribution, expressed in kidney, colon and skin.

The protein localises to the cell junction. It is found in the tight junction. The enzyme catalyses L-seryl-[protein] + ATP = O-phospho-L-seryl-[protein] + ADP + H(+). It carries out the reaction L-threonyl-[protein] + ATP = O-phospho-L-threonyl-[protein] + ADP + H(+). Activation requires autophosphorylation of Ser-331 and Ser-335. Autophosphorylation and subsequent activation is inhibited by increases in intracellular ionic strength: Cl(-) potently inhibits WNK4 kinase activity via direct binding. Also inhibited by K(+) ions. Serine/threonine-protein kinase component of the WNK4-SPAK/OSR1 kinase cascade, which acts as a key regulator of ion transport in the distal nephron and blood pressure. The WNK4-SPAK/OSR1 kinase cascade is composed of WNK4, which mediates phosphorylation and activation of downstream kinases OXSR1/OSR1 and STK39/SPAK. Following activation, OXSR1/OSR1 and STK39/SPAK catalyze phosphorylation of ion cotransporters, such as SLC12A1/NKCC2, SLC12A2/NKCC1, SLC12A3/NCC, SLC12A5/KCC2 or SLC12A6/KCC3, regulating their activity. Acts as a molecular switch that regulates the balance between renal salt reabsorption and K(+) secretion by modulating the activities of renal transporters and channels, including the Na-Cl cotransporter SLC12A3/NCC and the K(+) channel, KCNJ1/ROMK. Regulates NaCl reabsorption in the distal nephron by activating the thiazide-sensitive Na-Cl cotransporter SLC12A3/NCC in distal convoluted tubule cells of kidney: activates SLC12A3/NCC in a OXSR1/OSR1- and STK39/SPAK-dependent process. Also acts as a scaffold protein independently of its protein kinase activity: negatively regulates cell membrane localization of various transporters and channels (CFTR, KCNJ1/ROMK, SLC4A4, SLC26A9 and TRPV4) by clathrin-dependent endocytosis. Also inhibits the activity of the epithelial Na(+) channel (ENaC) SCNN1A, SCNN1B, SCNN1D in a inase-independent mechanism. May also phosphorylate NEDD4L. This is Serine/threonine-protein kinase WNK4 from Homo sapiens (Human).